Here is a 237-residue protein sequence, read N- to C-terminus: N-(5'-phosphoribosyl)anthranilate isomerase (237 aa).

Belongs to the TrpF family.

It catalyses the reaction N-(5-phospho-beta-D-ribosyl)anthranilate = 1-(2-carboxyphenylamino)-1-deoxy-D-ribulose 5-phosphate. The protein operates within amino-acid biosynthesis; L-tryptophan biosynthesis; L-tryptophan from chorismate: step 3/5. The polypeptide is N-(5'-phosphoribosyl)anthranilate isomerase (Desulfitobacterium hafniense (strain DSM 10664 / DCB-2)).